Consider the following 253-residue polypeptide: Sulfate transporter CysZ (253 aa).

The next 4 helical transmembrane spans lie at 31–51 (FVIL…WWLF), 75–95 (LLWP…FSTI), 151–171 (IVLL…PVLW), and 222–242 (IPLL…AMWV).

It belongs to the CysZ family.

The protein resides in the cell inner membrane. High affinity, high specificity proton-dependent sulfate transporter, which mediates sulfate uptake. Provides the sulfur source for the cysteine synthesis pathway. In Shigella flexneri, this protein is Sulfate transporter CysZ.